A 412-amino-acid chain; its full sequence is L-threonine:uridine-5'-aldehyde transaldolase (412 aa).

K229 is modified (N6-(pyridoxal phosphate)lysine).

The protein belongs to the SHMT family. The cofactor is pyridoxal 5'-phosphate.

It carries out the reaction uridine-5'-aldehyde + L-threonine = (5'S,6'S)-C-glycyluridine + acetaldehyde. It participates in antibiotic biosynthesis. In terms of biological role, transaldolase involved in the biosynthesis of the capuramycin-type nucleoside antibiotic A-503083. Catalyzes the condensation of L-threonine and uridine-5'-aldehyde to form 5'-C-glycyluridine (GlyU). Forms (5'S,6'S)-GlyU. This is L-threonine:uridine-5'-aldehyde transaldolase from Streptomyces sp.